Here is a 224-residue protein sequence, read N- to C-terminus: Late embryogenesis abundant protein, group 3 (224 aa).

Disordered regions lie at residues 1–169 (MASN…KDKT) and 193–224 (NTLGMGGDNTITTKDNTTGATTKDTTTTTRNH). Residues 13–23 (GETKARNEEKT) are compositionally biased toward basic and acidic residues. Repeat copies occupy residues 26–36 (VMGATKDKAGQ), 37–47 (TTEATKQKAGE), 48–58 (TTEATKQKAAE), 59–69 (TTEAAKQKASE), and 70–80 (TAEATKQKAAE). Residues 26 to 153 (VMGATKDKAG…TEAAKQKASE (128 aa)) are 12 X 11 AA tandem repeats. Basic and acidic residues-rich tracts occupy residues 41–85 (TKQK…KDKT), 92–109 (AKEKTYETAQSAKERAAQ), and 120–151 (EKTEAAKQKAAETTEAARQKAAEATEAAKQKA). A 6; truncated repeat occupies 81-87 (AKDKTAQ). Repeat copies occupy residues 88–98 (TAQAAKEKTYE), 99–109 (TAQSAKERAAQ), 121–131 (KTEAAKQKAAE), 132–142 (TTEAARQKAAE), and 143–153 (ATEAAKQKASE). Positions 200–224 (DNTITTKDNTTGATTKDTTTTTRNH) are enriched in low complexity.

It belongs to the LEA type 4 family.

The polypeptide is Late embryogenesis abundant protein, group 3 (Triticum aestivum (Wheat)).